The primary structure comprises 92 residues: UPF0125 protein NMA1005 (92 aa).

This sequence belongs to the UPF0125 (RnfH) family.

The chain is UPF0125 protein NMA1005 from Neisseria meningitidis serogroup A / serotype 4A (strain DSM 15465 / Z2491).